The following is a 118-amino-acid chain: Superoxide-generating NADPH oxidase light chain subunit (118 aa).

Transmembrane regions (helical) follow at residues 9–29 (WAAMIGMAACWCLIAGGIMGI), 36–56 (IAIYSICVGGVLYPLLYPLSF), 62–82 (AIFHQYYVAAALMAGLSVLCY), and 83–103 (FLVPTMLAAMVMDISAVVFLI).

It belongs to the p22phox family. In terms of assembly, composed of a heavy chain and a light chain.

It is found in the cell membrane. Functionally, critical component of the membrane-bound oxidase of phagocytes that generates superoxide. In Dictyostelium discoideum (Social amoeba), this protein is Superoxide-generating NADPH oxidase light chain subunit (cybA).